The chain runs to 101 residues: Apolipoprotein C-II (101 aa).

The signal sequence occupies residues 1–22 (MGTRLLPALFLVLLVLGFEVQG). The segment at 23-38 (TQQPQQDEMPSPTFLT) is O-glycosylated at one site. Residues 66-74 (AVDEKLRDL) are lipid binding. The tract at residues 78-101 (STAAMSTYTGIFTDQVLSVLKGEE) is lipoprotein lipase cofactor.

It belongs to the apolipoprotein C2 family. Post-translationally, proapolipoprotein C-II is synthesized as a sialic acid containing glycoprotein which is subsequently desialylated prior to its proteolytic processing. In terms of processing, proapolipoprotein C-II, the major form found in plasma undergoes proteolytic cleavage of its N-terminal hexapeptide to generate apolipoprotein C-II, which occurs as the minor form in plasma. In terms of tissue distribution, liver and intestine.

It localises to the secreted. Functionally, component of chylomicrons, very low-density lipoproteins (VLDL), low-density lipoproteins (LDL), and high-density lipoproteins (HDL) in plasma. Plays an important role in lipoprotein metabolism as an activator of lipoprotein lipase. Both proapolipoprotein C-II and apolipoprotein C-II can activate lipoprotein lipase. In normolipidemic individuals, it is mainly distributed in the HDL, whereas in hypertriglyceridemic individuals, predominantly found in the VLDL and LDL. In Homo sapiens (Human), this protein is Apolipoprotein C-II (APOC2).